Reading from the N-terminus, the 439-residue chain is GTPase Obg (439 aa).

The 160-residue stretch at 3–162 (GEFYDSARIF…REIELELKLL (160 aa)) folds into the Obg domain. One can recognise an OBG-type G domain in the interval 163–333 (ADVGLIGFPN…LLQRVAERLR (171 aa)). GTP is bound by residues 169–176 (GFPNAGKS), 194–198 (FTTLQ), 215–218 (DIPG), 285–288 (NKAD), and 314–316 (SAA). Ser-176 and Thr-196 together coordinate Mg(2+). In terms of domain architecture, OCT spans 351–428 (VPEVDERLYT…IEQAAFDWED (78 aa)).

This sequence belongs to the TRAFAC class OBG-HflX-like GTPase superfamily. OBG GTPase family. Monomer. Mg(2+) is required as a cofactor.

The protein localises to the cytoplasm. Functionally, an essential GTPase which binds GTP, GDP and possibly (p)ppGpp with moderate affinity, with high nucleotide exchange rates and a fairly low GTP hydrolysis rate. Plays a role in control of the cell cycle, stress response, ribosome biogenesis and in those bacteria that undergo differentiation, in morphogenesis control. The protein is GTPase Obg of Roseiflexus castenholzii (strain DSM 13941 / HLO8).